A 947-amino-acid chain; its full sequence is Bifunctional glutamine synthetase adenylyltransferase/adenylyl-removing enzyme (947 aa).

Residues Met1 to Glu440 are adenylyl removase. The segment at Ser450–Val947 is adenylyl transferase.

It belongs to the GlnE family. The cofactor is Mg(2+).

The enzyme catalyses [glutamine synthetase]-O(4)-(5'-adenylyl)-L-tyrosine + phosphate = [glutamine synthetase]-L-tyrosine + ADP. It carries out the reaction [glutamine synthetase]-L-tyrosine + ATP = [glutamine synthetase]-O(4)-(5'-adenylyl)-L-tyrosine + diphosphate. Its function is as follows. Involved in the regulation of glutamine synthetase GlnA, a key enzyme in the process to assimilate ammonia. When cellular nitrogen levels are high, the C-terminal adenylyl transferase (AT) inactivates GlnA by covalent transfer of an adenylyl group from ATP to specific tyrosine residue of GlnA, thus reducing its activity. Conversely, when nitrogen levels are low, the N-terminal adenylyl removase (AR) activates GlnA by removing the adenylyl group by phosphorolysis, increasing its activity. The regulatory region of GlnE binds the signal transduction protein PII (GlnB) which indicates the nitrogen status of the cell. This Salmonella gallinarum (strain 287/91 / NCTC 13346) protein is Bifunctional glutamine synthetase adenylyltransferase/adenylyl-removing enzyme.